Here is a 549-residue protein sequence, read N- to C-terminus: Protein X92 (549 aa).

The protein is Protein X92 of Trypanosoma brucei brucei.